Consider the following 218-residue polypeptide: MRLILLGAPGAGKGTQAAFICQKYGIPQISTGDMLRAAVKAGTPLGQQAKAVMDAGKLVSDDLIINLVKDRIAQPDCAKGFLFDGFPRTIPQADAMKAAGVKLDYVLEIDVPFDAIIERMSGRRSHPASGRTYHVKFNPPKVEGKDDVTGEDLIQREDDKEDTVKKRLEVYSAQTRPLVEYYSTWAKNDPANAPKYRAISGTGTVEEITRRALAALAD.

10-15 contributes to the ATP binding site; that stretch reads GAGKGT. Residues 30–59 are NMP; sequence STGDMLRAAVKAGTPLGQQAKAVMDAGKLV. AMP is bound by residues Thr31, Arg36, 57–59, 85–88, and Gln92; these read KLV and GFPR. Positions 122–159 are LID; the sequence is GRRSHPASGRTYHVKFNPPKVEGKDDVTGEDLIQREDD. Residues Arg123 and 132 to 133 each bind ATP; that span reads TY. The tract at residues 127–147 is disordered; sequence PASGRTYHVKFNPPKVEGKDD. AMP-binding residues include Arg156 and Arg167. Position 203 (Gly203) interacts with ATP.

It belongs to the adenylate kinase family. As to quaternary structure, monomer.

Its subcellular location is the cytoplasm. It carries out the reaction AMP + ATP = 2 ADP. Its pathway is purine metabolism; AMP biosynthesis via salvage pathway; AMP from ADP: step 1/1. In terms of biological role, catalyzes the reversible transfer of the terminal phosphate group between ATP and AMP. Plays an important role in cellular energy homeostasis and in adenine nucleotide metabolism. The polypeptide is Adenylate kinase (Paracidovorax citrulli (strain AAC00-1) (Acidovorax citrulli)).